The primary structure comprises 207 residues: Probable GTP-binding protein EngB (207 aa).

The EngB-type G domain occupies 24–199 (GGYEVAFAGR…RGIVGGWLGL (176 aa)). Residues 32-39 (GRSNAGKS), 59-63 (GRTQQ), 77-80 (DLPG), 144-147 (TKAD), and 178-180 (YSG) each bind GTP. Mg(2+)-binding residues include Ser39 and Thr61.

This sequence belongs to the TRAFAC class TrmE-Era-EngA-EngB-Septin-like GTPase superfamily. EngB GTPase family. Mg(2+) serves as cofactor.

Its function is as follows. Necessary for normal cell division and for the maintenance of normal septation. The protein is Probable GTP-binding protein EngB of Xanthomonas oryzae pv. oryzae (strain MAFF 311018).